The sequence spans 93 residues: Acylphosphatase (93 aa).

The Acylphosphatase-like domain maps to 3 to 93 (KQQYFISGKV…FQFNNFKIYY (91 aa)). Active-site residues include Arg18 and Asn36.

The protein belongs to the acylphosphatase family.

It carries out the reaction an acyl phosphate + H2O = a carboxylate + phosphate + H(+). The polypeptide is Acylphosphatase (acyP) (Borrelia garinii subsp. bavariensis (strain ATCC BAA-2496 / DSM 23469 / PBi) (Borreliella bavariensis)).